Consider the following 524-residue polypeptide: Lysophospholipid acyltransferase LPCAT4 (524 aa).

The next 2 membrane-spanning stretches (helical) occupy residues 40-62 (CLLG…FLLW) and 87-107 (TVCH…LGFL). The HXXXXD motif signature appears at 129–134 (HSTFFD). An N-linked (GlcNAc...) asparagine glycan is attached at Asn-152. The disordered stretch occupies residues 490–524 (PHKPRSTSQIPNASSPSSPTALANGTVQAPKQKGD). The segment covering 495-518 (STSQIPNASSPSSPTALANGTVQA) has biased composition (polar residues).

Belongs to the 1-acyl-sn-glycerol-3-phosphate acyltransferase family. In terms of tissue distribution, widely expressed with much higher level in brain. Expressed in erythroleukemic cells but not in reticulocytes.

The protein resides in the endoplasmic reticulum membrane. It carries out the reaction a 1-acyl-sn-glycero-3-phosphoethanolamine + an acyl-CoA = a 1,2-diacyl-sn-glycero-3-phosphoethanolamine + CoA. The enzyme catalyses a 1-O-(1Z-alkenyl)-sn-glycero-3-phosphoethanolamine + an acyl-CoA = a 1-O-(1Z-alkenyl)-2-acyl-sn-glycero-3-phosphoethanolamine + CoA. It catalyses the reaction a 1-acyl-sn-glycero-3-phosphocholine + an acyl-CoA = a 1,2-diacyl-sn-glycero-3-phosphocholine + CoA. The catalysed reaction is a 1-O-alkyl-sn-glycero-3-phosphocholine + acetyl-CoA = a 1-O-alkyl-2-acetyl-sn-glycero-3-phosphocholine + CoA. It carries out the reaction a 1-acyl-sn-glycero-3-phospho-L-serine + an acyl-CoA = a 1,2-diacyl-sn-glycero-3-phospho-L-serine + CoA. The enzyme catalyses octanoyl-CoA + a 1-acyl-sn-glycero-3-phosphoethanolamine = 1-acyl-2-octanoyl-sn-glycero-3-phosphoethanolamine + CoA. It catalyses the reaction a 1-acyl-sn-glycero-3-phosphoethanolamine + hexadecanoyl-CoA = 1-acyl-2-hexadecanoyl-sn-glycero-3-phosphoethanolamine + CoA. The catalysed reaction is a 1-acyl-sn-glycero-3-phosphoethanolamine + octadecanoyl-CoA = 1-acyl-2-octadecanoyl-sn-glycero-3-phosphoethanolamine + CoA. It carries out the reaction a 1-acyl-sn-glycero-3-phosphoethanolamine + (9Z)-octadecenoyl-CoA = 1-acyl-2-(9Z)-octadecenoyl-sn-glycero-3-phosphoethanolamine + CoA. The enzyme catalyses a 1-acyl-sn-glycero-3-phosphoethanolamine + (5Z,8Z,11Z,14Z)-eicosatetraenoyl-CoA = 1-acyl-2-(5Z,8Z,11Z,14Z)-eicosatetraenoyl-sn-glycero-3-phosphoethanolamine + CoA. It catalyses the reaction a 1-O-(1Z-alkenyl)-sn-glycero-3-phosphoethanolamine + octanoyl-CoA = 1-O-(1Z)-alkenyl-2-octanoyl-sn-glycero-3-phosphoethanolamine + CoA. The catalysed reaction is a 1-O-(1Z-alkenyl)-sn-glycero-3-phosphoethanolamine + hexadecanoyl-CoA = 1-O-(1Z)-alkenyl-2-hexadecanoyl-sn-glycero-3-phosphoethanolamine + CoA. It carries out the reaction a 1-O-(1Z-alkenyl)-sn-glycero-3-phosphoethanolamine + octadecanoyl-CoA = 1-O-(1Z)-alkenyl-2-octadecanoyl-sn-glycero-3-phosphoethanolamine + CoA. The enzyme catalyses a 1-O-(1Z-alkenyl)-sn-glycero-3-phosphoethanolamine + (9Z)-octadecenoyl-CoA = 1-O-(1Z)-alkenyl-2-(9Z)-octadecenoyl-sn-glycero-3-phosphoethanolamine + CoA. It catalyses the reaction a 1-O-(1Z-alkenyl)-sn-glycero-3-phosphoethanolamine + (5Z,8Z,11Z,14Z)-eicosatetraenoyl-CoA = 1-O-(1Z)-alkenyl-2-(5Z,8Z,11Z,14Z)-eicosatetraenoyl-sn-glycero-3-phosphoethanolamine + CoA. The catalysed reaction is a 1-acyl-sn-glycero-3-phosphocholine + hexadecanoyl-CoA = 1-acyl-2-hexadecanoyl-sn-glycero-3-phosphocholine + CoA. It carries out the reaction a 1-acyl-sn-glycero-3-phosphocholine + (9Z)-octadecenoyl-CoA = a 1-acyl-2-(9Z)-octadecenoyl-sn-glycero-3-phosphocholine + CoA. The enzyme catalyses 1-O-hexadecyl-sn-glycero-3-phosphocholine + (9Z)-octadecenoyl-CoA = 1-O-hexadecyl-2-(9Z)-octadecenoyl-sn-glycero-3-phosphocholine + CoA. It catalyses the reaction 1-O-hexadecyl-sn-glycero-3-phosphocholine + (5Z,8Z,11Z,14Z)-eicosatetraenoyl-CoA = 1-O-hexadecyl-2-(5Z,8Z,11Z,14Z)-eicosatetraenoyl-sn-glycero-3-phosphocholine + CoA. The catalysed reaction is 1-hexadecanoyl-sn-glycero-3-phospho-L-serine + (9Z)-octadecenoyl-CoA = 1-hexadecanoyl-2-(9Z-octadecenoyl)-sn-glycero-3-phospho-L-serine + CoA. It carries out the reaction 1-octadecanoyl-sn-glycero-3-phospho-(1'-sn-glycerol) + (9Z)-octadecenoyl-CoA = 1-octadecanoyl-2-(9Z-octadecenoyl)-sn-glycero-3-phospho-(1'-sn-glycerol) + CoA. The enzyme catalyses 1-octadecanoyl-sn-glycero-3-phospho-(1'-sn-glycerol) + (5Z,8Z,11Z,14Z)-eicosatetraenoyl-CoA = 1-octadecanoyl-2-(5Z,8Z,11Z,14Z-eicosatetraenoyl)-sn-glycero-3-phospho-(1'-sn-glycerol) + CoA. It functions in the pathway lipid metabolism; phospholipid metabolism. Its function is as follows. Displays acyl-CoA-dependent lysophospholipid acyltransferase activity with a subset of lysophospholipids as substrates; converts lysophosphatidylethanolamine to phosphatidylethanolamine, 1-alkenyl-lysophatidylethanolamine to 1-alkenyl-phosphatidylethanolamine, lysophosphatidylglycerol and alkyl-lysophosphatidylcholine to phosphatidylglycerol and alkyl-phosphatidylcholine, respectively. In contrast, has no lysophosphatidylinositol, glycerol-3-phosphate, diacylglycerol or lysophosphatidic acid acyltransferase activity. Prefers long chain acyl-CoAs (C16, C18) as acyl donors. Converts lysophosphatidylcholine to phosphatidycholine. The sequence is that of Lysophospholipid acyltransferase LPCAT4 (Lpcat4) from Mus musculus (Mouse).